We begin with the raw amino-acid sequence, 251 residues long: 2,3-bisphosphoglycerate-dependent phosphoglycerate mutase (251 aa).

Substrate is bound by residues 8–15 (RHGESLWN), 21–22 (TG), Arg60, 87–90 (ERHY), Lys98, 114–115 (RR), and 183–184 (GN). His9 functions as the Tele-phosphohistidine intermediate in the catalytic mechanism. The Proton donor/acceptor role is filled by Glu87.

This sequence belongs to the phosphoglycerate mutase family. BPG-dependent PGAM subfamily.

It carries out the reaction (2R)-2-phosphoglycerate = (2R)-3-phosphoglycerate. It functions in the pathway carbohydrate degradation; glycolysis; pyruvate from D-glyceraldehyde 3-phosphate: step 3/5. Catalyzes the interconversion of 2-phosphoglycerate and 3-phosphoglycerate. The polypeptide is 2,3-bisphosphoglycerate-dependent phosphoglycerate mutase (Thermoanaerobacter sp. (strain X514)).